We begin with the raw amino-acid sequence, 228 residues long: MPKLVFSRHGLSEWNALNQFTGWADVDLAPEGVEEAKEGGRKIKEAGIEFDVAYTSVLTRAIKTCNYLLEYSDQLWVPQIKSWRLNERHYGKLQGLNKKETAEKYGDEQVHIWRRSYDTLPPLMEATDEGSAANDRRYAMLDQRDIPGGENLKVTLERALPFWQDEIAPALKDNKTVLVAAHGNSLRALAKHIEGISDEDIMDLEIPTGKPLVYELNDDLTVKEKYYL.

Residues arginine 8–asparagine 15, threonine 21–glycine 22, arginine 60, glutamate 87–tyrosine 90, lysine 98, arginine 114–arginine 115, and glycine 183–asparagine 184 contribute to the substrate site. Catalysis depends on histidine 9, which acts as the Tele-phosphohistidine intermediate. Glutamate 87 functions as the Proton donor/acceptor in the catalytic mechanism.

It belongs to the phosphoglycerate mutase family. BPG-dependent PGAM subfamily.

It catalyses the reaction (2R)-2-phosphoglycerate = (2R)-3-phosphoglycerate. Its pathway is carbohydrate degradation; glycolysis; pyruvate from D-glyceraldehyde 3-phosphate: step 3/5. Functionally, catalyzes the interconversion of 2-phosphoglycerate and 3-phosphoglycerate. This is 2,3-bisphosphoglycerate-dependent phosphoglycerate mutase from Enterococcus faecalis (strain ATCC 700802 / V583).